A 334-amino-acid chain; its full sequence is Hydroxyproline O-arabinosyltransferase NOD3 (334 aa).

A helical; Signal-anchor membrane pass occupies residues 1–18 (LLMVLGFFFATYNLVSMI).

It belongs to the RDN family.

The protein localises to the golgi apparatus membrane. It carries out the reaction trans-4-hydroxy-L-prolyl-[protein] + UDP-beta-L-arabinofuranose = O-(beta-L-arabinofuranosyl)-trans-4-hydroxy-L-prolyl-[protein] + UDP + H(+). In terms of biological role, probable glycosyltransferase involved in the O-arabinosylation of several proteins including extensins and small signaling peptides. Catalyzes the transfer of the initial L-arabinose to the hydroxyl group of Hyp residues. Probably involved in the arabinosylation of CLAVATA3/ESR-related (CLE) signaling peptides that move from root to shoot, to interact with receptor kinase signaling that regulates nodulation. Involved in long distance nodulation signaling events. Involved in the autoregulation of nodulation (AON), a long distance systemic signaling from root to shoot and back again, which allows legumes to limit the number of root nodules formed based on available nitrogen and previous rhizobial colonization. In Pisum sativum (Garden pea), this protein is Hydroxyproline O-arabinosyltransferase NOD3.